The chain runs to 201 residues: 3-isopropylmalate dehydratase small subunit (201 aa).

This sequence belongs to the LeuD family. LeuD type 1 subfamily. Heterodimer of LeuC and LeuD.

The enzyme catalyses (2R,3S)-3-isopropylmalate = (2S)-2-isopropylmalate. It participates in amino-acid biosynthesis; L-leucine biosynthesis; L-leucine from 3-methyl-2-oxobutanoate: step 2/4. Its function is as follows. Catalyzes the isomerization between 2-isopropylmalate and 3-isopropylmalate, via the formation of 2-isopropylmaleate. This Escherichia coli O127:H6 (strain E2348/69 / EPEC) protein is 3-isopropylmalate dehydratase small subunit.